The chain runs to 399 residues: Cell division protein FtsZ (399 aa).

GTP is bound by residues 30–34 (GGGSN), 117–119 (GTG), Glu-148, Lys-152, and Asp-196. A disordered region spans residues 349-368 (TLMSGNQNAPSGSYEQQDSS). A compositionally biased stretch (polar residues) spans 351-368 (MSGNQNAPSGSYEQQDSS).

It belongs to the FtsZ family. Homodimer. Polymerizes to form a dynamic ring structure in a strictly GTP-dependent manner. Interacts directly with several other division proteins.

Its subcellular location is the cytoplasm. Essential cell division protein that forms a contractile ring structure (Z ring) at the future cell division site. The regulation of the ring assembly controls the timing and the location of cell division. One of the functions of the FtsZ ring is to recruit other cell division proteins to the septum to produce a new cell wall between the dividing cells. Binds GTP and shows GTPase activity. The sequence is that of Cell division protein FtsZ from Borreliella burgdorferi (strain ATCC 35210 / DSM 4680 / CIP 102532 / B31) (Borrelia burgdorferi).